Consider the following 713-residue polypeptide: Polyphosphate kinase (713 aa).

N63 lines the ATP pocket. The Mg(2+) site is built by R394 and R424. Catalysis depends on H454, which acts as the Phosphohistidine intermediate. Residues Y487, R583, and H611 each coordinate ATP.

It belongs to the polyphosphate kinase 1 (PPK1) family. Requires Mg(2+) as cofactor. An intermediate of this reaction is the autophosphorylated ppk in which a phosphate is covalently linked to a histidine residue through a N-P bond.

The catalysed reaction is [phosphate](n) + ATP = [phosphate](n+1) + ADP. In terms of biological role, catalyzes the reversible transfer of the terminal phosphate of ATP to form a long-chain polyphosphate (polyP). The polypeptide is Polyphosphate kinase (Prosthecochloris aestuarii (strain DSM 271 / SK 413)).